An 89-amino-acid chain; its full sequence is Large ribosomal subunit protein bL27 (89 aa).

The segment at 1–21 (MAHKKAGGSSRNGRDSAGRRL) is disordered.

The protein belongs to the bacterial ribosomal protein bL27 family.

This chain is Large ribosomal subunit protein bL27, found in Novosphingobium aromaticivorans (strain ATCC 700278 / DSM 12444 / CCUG 56034 / CIP 105152 / NBRC 16084 / F199).